The following is a 319-amino-acid chain: Cobalamin biosynthesis protein CbiB (319 aa).

4 consecutive transmembrane segments (helical) span residues 56–76 (VMWVVVVGVTWGVAWGVLALA), 82–102 (WFGWSVEVWMIFTTLAGRSLA), 153–173 (VDGIIAPLFFLFLGGAPLAMA), and 296–316 (LMWVASTLALALFIAARCGLS).

This sequence belongs to the CobD/CbiB family.

It is found in the cell membrane. Its pathway is cofactor biosynthesis; adenosylcobalamin biosynthesis. Converts cobyric acid to cobinamide by the addition of aminopropanol on the F carboxylic group. However, the true cosubstrate could be (R)-1-amino-2-propanol O-2-phosphate, leading to cobinamide phosphate. The chain is Cobalamin biosynthesis protein CbiB from Salmonella paratyphi A (strain ATCC 9150 / SARB42).